The following is a 232-amino-acid chain: 5'-methylthioadenosine/S-adenosylhomocysteine nucleosidase (232 aa).

Glu-12 serves as the catalytic Proton acceptor. Substrate is bound by residues Gly-78, Ile-152, and 173–174 (ME). Residue Asp-197 is the Proton donor of the active site.

This sequence belongs to the PNP/UDP phosphorylase family. MtnN subfamily. Homodimer.

The enzyme catalyses S-adenosyl-L-homocysteine + H2O = S-(5-deoxy-D-ribos-5-yl)-L-homocysteine + adenine. It carries out the reaction S-methyl-5'-thioadenosine + H2O = 5-(methylsulfanyl)-D-ribose + adenine. It catalyses the reaction 5'-deoxyadenosine + H2O = 5-deoxy-D-ribose + adenine. It functions in the pathway amino-acid biosynthesis; L-methionine biosynthesis via salvage pathway; S-methyl-5-thio-alpha-D-ribose 1-phosphate from S-methyl-5'-thioadenosine (hydrolase route): step 1/2. In terms of biological role, catalyzes the irreversible cleavage of the glycosidic bond in both 5'-methylthioadenosine (MTA) and S-adenosylhomocysteine (SAH/AdoHcy) to adenine and the corresponding thioribose, 5'-methylthioribose and S-ribosylhomocysteine, respectively. Also cleaves 5'-deoxyadenosine, a toxic by-product of radical S-adenosylmethionine (SAM) enzymes, into 5-deoxyribose and adenine. Thus, is required for in vivo function of the radical SAM enzymes biotin synthase and lipoic acid synthase, that are inhibited by 5'-deoxyadenosine accumulation. In Pectobacterium carotovorum subsp. carotovorum (strain PC1), this protein is 5'-methylthioadenosine/S-adenosylhomocysteine nucleosidase.